A 67-amino-acid chain; its full sequence is Prokaryotic ubiquitin-like protein Pup (67 aa).

The disordered stretch occupies residues 1-36; that stretch reads MPQQFEQPQAQQAATQEDDALATTQAAAQTESADQA. The interval 23-61 is ARC ATPase binding; sequence TTQAAAQTESADQADVLDDILDDIESTLETNAEEYVNSF. An Isoglutamyl lysine isopeptide (Glu-Lys) (interchain with K-? in acceptor proteins) cross-link involves residue glutamate 67.

The protein belongs to the prokaryotic ubiquitin-like protein family. Strongly interacts with the proteasome-associated ATPase ARC through a hydrophobic interface; the interacting region of Pup lies in its C-terminal half. There is one Pup binding site per ARC hexamer ring.

It participates in protein degradation; proteasomal Pup-dependent pathway. Protein modifier that is covalently attached to lysine residues of substrate proteins, thereby targeting them for proteasomal degradation. The tagging system is termed pupylation. This chain is Prokaryotic ubiquitin-like protein Pup, found in Bifidobacterium longum (strain DJO10A).